Here is a 250-residue protein sequence, read N- to C-terminus: Ribosomal RNA small subunit methyltransferase J (250 aa).

S-adenosyl-L-methionine-binding positions include 101–102, 117–118, 153–154, and Asp-171; these read RD, ER, and SS.

It belongs to the methyltransferase superfamily. RsmJ family.

Its subcellular location is the cytoplasm. It catalyses the reaction guanosine(1516) in 16S rRNA + S-adenosyl-L-methionine = N(2)-methylguanosine(1516) in 16S rRNA + S-adenosyl-L-homocysteine + H(+). Its function is as follows. Specifically methylates the guanosine in position 1516 of 16S rRNA. In Escherichia coli (strain UTI89 / UPEC), this protein is Ribosomal RNA small subunit methyltransferase J.